The chain runs to 163 residues: ATP synthase subunit b 1 (163 aa).

Residues 5 to 25 (LDATFFAFVGLVLFLALVVYL) traverse the membrane as a helical segment.

This sequence belongs to the ATPase B chain family. F-type ATPases have 2 components, F(1) - the catalytic core - and F(0) - the membrane proton channel. F(1) has five subunits: alpha(3), beta(3), gamma(1), delta(1), epsilon(1). F(0) has three main subunits: a(1), b(2) and c(10-14). The alpha and beta chains form an alternating ring which encloses part of the gamma chain. F(1) is attached to F(0) by a central stalk formed by the gamma and epsilon chains, while a peripheral stalk is formed by the delta and b chains.

The protein localises to the cell inner membrane. F(1)F(0) ATP synthase produces ATP from ADP in the presence of a proton or sodium gradient. F-type ATPases consist of two structural domains, F(1) containing the extramembraneous catalytic core and F(0) containing the membrane proton channel, linked together by a central stalk and a peripheral stalk. During catalysis, ATP synthesis in the catalytic domain of F(1) is coupled via a rotary mechanism of the central stalk subunits to proton translocation. In terms of biological role, component of the F(0) channel, it forms part of the peripheral stalk, linking F(1) to F(0). The sequence is that of ATP synthase subunit b 1 from Rhizobium etli (strain CIAT 652).